A 140-amino-acid polypeptide reads, in one-letter code: Fluoride-specific ion channel FluC 2 (140 aa).

Helical transmembrane passes span 7–27, 45–65, 77–97, and 106–126; these read VPPLDPAILLAISLGGGLGAL, WATFVVNVTGCFAIGVLMVLV, PFAGVGLLGGFTTFSTYGLEI, and VLEALGYLAGTVLAALAGVVL. The Na(+) site is built by Gly-85 and Thr-88.

Belongs to the fluoride channel Fluc/FEX (TC 1.A.43) family.

The protein resides in the cell membrane. It catalyses the reaction fluoride(in) = fluoride(out). Na(+) is not transported, but it plays an essential structural role and its presence is essential for fluoride channel function. Functionally, fluoride-specific ion channel. Important for reducing fluoride concentration in the cell, thus reducing its toxicity. The sequence is that of Fluoride-specific ion channel FluC 2 from Nocardia farcinica (strain IFM 10152).